The chain runs to 178 residues: CASP-like protein 2A2 (178 aa).

Topologically, residues 1-22 are cytoplasmic; it reads MDKTDQTAIDGSALELNRTEKT. A helical membrane pass occupies residues 23 to 43; that stretch reads VEAVLRVASMALSITGLVIMI. Residues 44–69 lie on the Extracellular side of the membrane; sequence KNSISNDFGSLSYSNLGAFMYLVGAN. Residues 70-90 traverse the membrane as a helical segment; the sequence is GVCAAYSLLSALAILALPCPI. Topologically, residues 91-96 are cytoplasmic; that stretch reads SKVQVR. The helical transmembrane segment at 97 to 117 threads the bilayer; that stretch reads TLFLLDQVVTYVVLAAGAVSA. Residues 118 to 145 lie on the Extracellular side of the membrane; the sequence is ETVYLAYYGNIPITWSSACDSYGIFCHK. The helical transmembrane segment at 146-166 threads the bilayer; the sequence is ALISVVFTFVVSLLYMLLSLI. Residues 167 to 178 lie on the Cytoplasmic side of the membrane; that stretch reads SSYRLFSRFEAP.

This sequence belongs to the Casparian strip membrane proteins (CASP) family. In terms of assembly, homodimer and heterodimers.

The protein localises to the cell membrane. The sequence is that of CASP-like protein 2A2 from Arabidopsis lyrata subsp. lyrata (Lyre-leaved rock-cress).